The chain runs to 790 residues: Centrosomal protein of 78 kDa (790 aa).

5 disordered regions span residues 325–345 (YQWVTSPSSKEPSKTAKQRKK), 362–385 (GLATKKPSSNGRKQGLGKDCYAPN), 428–462 (VTVTVESPSSSETDETEDSSESVQEAPQKTSIKEE), 654–732 (AKTG…LNEP), and 756–790 (KTIKSKPNLLEHSESDTLGSDFELQERVHSSAHLT). A phosphoserine mark is found at Ser-330 and Ser-332. Positions 428–438 (VTVTVESPSSS) are enriched in low complexity. Residues 455-510 (QKTSIKEETLQEKLEECLRQLKEERVIRLKADKRVSELEHENAQLRNINFSLSEAL) adopt a coiled-coil conformation. Basic and acidic residues-rich tracts occupy residues 693–708 (PSRRPSAERHPRKDLL) and 721–732 (GPGDRRSLLNEP).

The protein belongs to the CEP78 family. Interacts with PLK4. Interacts with FAM161A. Interacts with IFT20; regulating IFT20 stability and localization. Interacts with TTC21A; regulating TTC21A stability and localization. Interacts with USP16; promoting USP16-dependent deubiquitination of tektins. Interacts with DCAF1/VPRBP; promoting localization of the EDVP complex to centrosomes. Interacts with CEP350; promoting CEP78 localization to centrosome and centriole. In terms of tissue distribution, expressed by photoreceptor cells in the retina.

The protein resides in the cytoplasm. It localises to the cytoskeleton. Its subcellular location is the microtubule organizing center. It is found in the centrosome. The protein localises to the centriole. The protein resides in the cilium basal body. In terms of biological role, centriole wall protein that localizes to mature centrioles and regulates centriole and cilia biogenesis. Involved in centrosome duplication: required for efficient PLK4 centrosomal localization and PLK4-induced overduplication of centrioles. Involved in cilium biogenesis and controls cilium length. Acts as a regulator of protein stability by preventing ubiquitination of centrosomal proteins, such as CCP110 and tektins. Associates with the EDVP complex, preventing ubiquitination and degradation of CCP110. Promotes deubiquitination of tektin proteins (TEKT1, TEKT2, TEK3, TEKT4 and TEKT5) via its interaction with USP16. This is Centrosomal protein of 78 kDa from Mus musculus (Mouse).